The following is a 523-amino-acid chain: MGKKQHQKDKLYLTTSEWKSIGGHKDDTGTRLQRAQFKRLPINHCSLSLLPFEDPVCARSGEIFDLTAIVPYLKKHGKNPCTGKPLVAKDLIHLKFDKGEDGKFRCPVTFRTFTDHSHILAIATSGNVYSHEAVQELNLKRNHLKDLLTDVPFTRADIIDLQDPNHLEKFNMEQFLHVKLDLKTSEEIKKEKDAMKDPKFYIRRMNNACKSVLDQLDKEYVPKKSSTETDETADEINAAHYSQGKVAAGFTSTVMAPVTSNKAAVLDNDTVRYSRVKKNAFVRLVTNFGPLNLELFAPKVPKACENFITHCSNGYYNNTKFHRLIKNFMLQGGDPTGTGHGGESIWDKPFSDEFISGFSHDARGVLSMANKGSNTNGSQFFITFRPCKYLDRKHTIFGRLVGGQDTLTTIEKLETEEGTDVPMVSVVIMRAEVFVDPFEEAEKEVQAERAEILKKTSKDAASLANKKAKETATKPEAVGTGVGKYMKSAAAVNKRQGKMEDVPLEAAKKTKFARAGLGDFSKW.

A U-box domain is found at 38-111; sequence KRLPINHCSL…GKFRCPVTFR (74 aa). The 156-residue stretch at 278-433 folds into the PPIase cyclophilin-type domain; it reads KNAFVRLVTN…VSVVIMRAEV (156 aa).

It belongs to the cyclophilin-type PPIase family. PPIL2 subfamily. As to quaternary structure, interacts with mep-1. As to expression, exclusively in the larval body wall striated muscle cells.

Its subcellular location is the nucleus. It carries out the reaction [protein]-peptidylproline (omega=180) = [protein]-peptidylproline (omega=0). The catalysed reaction is S-ubiquitinyl-[E2 ubiquitin-conjugating enzyme]-L-cysteine + [acceptor protein]-L-lysine = [E2 ubiquitin-conjugating enzyme]-L-cysteine + N(6)-ubiquitinyl-[acceptor protein]-L-lysine.. It participates in protein modification; protein ubiquitination. In terms of biological role, may catalyze the cis-trans isomerization of proline imidic peptide bonds in oligopeptides thereby assisting the folding of proteins. May also function as a chaperone, playing a role in intracellular transport of proteins. May also have a protein ubiquitin ligase activity acting as an E3 ubiquitin protein ligase or as a ubiquitin-ubiquitin ligase promoting elongation of ubiquitin chains on proteins. Influences the hermaphrodite switch from spermatogenesis to oogenesis. Required for body wall muscle cell development. This is Peptidyl-prolyl cis-trans isomerase 4 (cyn-4) from Caenorhabditis elegans.